The chain runs to 256 residues: tRNA (guanine-N(7)-)-methyltransferase (256 aa).

Residues Met1–Ala25 form a disordered region. Residues Gly79, Glu102–Ile103, Asn137–Ala138, and Leu157 each bind S-adenosyl-L-methionine. Residue Asp160 is part of the active site. Residue Ser235 to Glu237 coordinates S-adenosyl-L-methionine.

This sequence belongs to the class I-like SAM-binding methyltransferase superfamily. TrmB family.

It localises to the nucleus. The enzyme catalyses guanosine(46) in tRNA + S-adenosyl-L-methionine = N(7)-methylguanosine(46) in tRNA + S-adenosyl-L-homocysteine. The protein operates within tRNA modification; N(7)-methylguanine-tRNA biosynthesis. In terms of biological role, catalyzes the formation of N(7)-methylguanine at position 46 (m7G46) in tRNA. This chain is tRNA (guanine-N(7)-)-methyltransferase, found in Drosophila simulans (Fruit fly).